The chain runs to 187 residues: Nuclear transcription factor Y subunit C-8 (187 aa).

Residues 163–187 (WPGAWTSVSGEEEEARGKKGGDDGN) form a disordered region. Residues 177 to 187 (ARGKKGGDDGN) are compositionally biased toward basic and acidic residues.

This sequence belongs to the NFYC/HAP5 subunit family. In terms of assembly, heterotrimeric transcription factor composed of three components, NF-YA, NF-YB and NF-YC. NF-YB and NF-YC must interact and dimerize for NF-YA association and DNA binding. As to expression, expressed in flowers and siliques.

The protein resides in the nucleus. Its function is as follows. Stimulates the transcription of various genes by recognizing and binding to a CCAAT motif in promoters. This chain is Nuclear transcription factor Y subunit C-8 (NFYC8), found in Arabidopsis thaliana (Mouse-ear cress).